A 393-amino-acid polypeptide reads, in one-letter code: MLTIGTALRPGATRVMLLGAGELGKEVAIECQRLGLEVIAVDRYADAPAMHVAHRSHVINMLDGAALKQLVAQEKPHYIVPEIEAIATDMLVELEKMGQHVVPCAEATRLTMNREGIRRLAAETLQLPTSSYRFADTDSAFFQAVRDIGYPCIVKPVMSSSGKGQSLIRSEEHLQAAWEYAQQGGRAGSGRVIIEGLVHFDFEITLLTIRAVDGIHFCAPIGHRQEDGDYRESWQPQAMSDIALQRAKEISAQVVTALGGFGLFGVELFVCGDDVIFSEVSPRPHDTGMVTLISQNMSEFALHVRAFLGLPIGTIRQYGAAASAVILPELTSQNITYRGLETALIGDTQIRLFGKPEIAGKRRLGVALAVADNIETAIEVAKKAAGNIEVSGE.

Residues 22 to 23 and glutamate 82 contribute to the N(1)-(5-phospho-beta-D-ribosyl)glycinamide site; that span reads EL. ATP-binding positions include arginine 114, lysine 155, 160 to 165, 195 to 198, and glutamate 203; these read SSGKGQ and EGLV. The ATP-grasp domain maps to 119–308; it reads RLAAETLQLP…EFALHVRAFL (190 aa). Mg(2+) is bound by residues glutamate 267 and glutamate 279. N(1)-(5-phospho-beta-D-ribosyl)glycinamide contacts are provided by residues aspartate 286, lysine 355, and 362–363; that span reads RR.

The protein belongs to the PurK/PurT family. As to quaternary structure, homodimer.

The enzyme catalyses N(1)-(5-phospho-beta-D-ribosyl)glycinamide + formate + ATP = N(2)-formyl-N(1)-(5-phospho-beta-D-ribosyl)glycinamide + ADP + phosphate + H(+). The protein operates within purine metabolism; IMP biosynthesis via de novo pathway; N(2)-formyl-N(1)-(5-phospho-D-ribosyl)glycinamide from N(1)-(5-phospho-D-ribosyl)glycinamide (formate route): step 1/1. Functionally, involved in the de novo purine biosynthesis. Catalyzes the transfer of formate to 5-phospho-ribosyl-glycinamide (GAR), producing 5-phospho-ribosyl-N-formylglycinamide (FGAR). Formate is provided by PurU via hydrolysis of 10-formyl-tetrahydrofolate. This chain is Formate-dependent phosphoribosylglycinamide formyltransferase, found in Yersinia pseudotuberculosis serotype O:3 (strain YPIII).